We begin with the raw amino-acid sequence, 1222 residues long: ATP-dependent helicase/nuclease subunit A (1222 aa).

In terms of domain architecture, UvrD-like helicase ATP-binding spans 27-483 (HLQENERCRD…RDYQKKPEQG (457 aa)). ATP is bound at residue 48 to 55 (AIYTSGQN). The region spanning 512 to 798 (ESVGDVLYDE…ADVEVATPKQ (287 aa)) is the UvrD-like helicase C-terminal domain.

Belongs to the helicase family. AddA subfamily. As to quaternary structure, heterodimer of AddA and AddB/RexB. Mg(2+) serves as cofactor.

It carries out the reaction Couples ATP hydrolysis with the unwinding of duplex DNA by translocating in the 3'-5' direction.. The enzyme catalyses ATP + H2O = ADP + phosphate + H(+). Its function is as follows. The heterodimer acts as both an ATP-dependent DNA helicase and an ATP-dependent, dual-direction single-stranded exonuclease. Recognizes the chi site generating a DNA molecule suitable for the initiation of homologous recombination. The AddA nuclease domain is required for chi fragment generation; this subunit has the helicase and 3' -&gt; 5' nuclease activities. This is ATP-dependent helicase/nuclease subunit A from Streptococcus pyogenes serotype M1.